A 247-amino-acid polypeptide reads, in one-letter code: Oocyte zinc finger protein XlCOF20 (247 aa).

8 consecutive C2H2-type zinc fingers follow at residues 6–28 (YDCR…QRVH), 34–56 (FPCT…QRVH), 62–84 (FICS…LRVH), 90–112 (FVCT…QRVH), 118–140 (FTCT…LRVH), 146–168 (FVCT…LRVH), 174–196 (FMCA…QRIC), and 225–247 (QSCA…MRVH).

This sequence belongs to the krueppel C2H2-type zinc-finger protein family.

The protein localises to the nucleus. In terms of biological role, may be involved in transcriptional regulation. In Xenopus laevis (African clawed frog), this protein is Oocyte zinc finger protein XlCOF20.